The chain runs to 390 residues: Protein shisa-9 (390 aa).

The first 22 residues, 1 to 22 (MTGIRAIFYYFLVDLLTLLCWA), serve as a signal peptide directing secretion. At 23–134 (QGKGGQHFGS…DPSHDPTRDK (112 aa)) the chain is on the extracellular side. N-linked (GlcNAc...) asparagine glycans are attached at residues Asn40 and Asn74. The helical transmembrane segment at 135 to 155 (TNLIVYIICGVVAVMVLVGIF) threads the bilayer. The Cytoplasmic portion of the chain corresponds to 156 to 390 (TKLGLEKAHR…VTNSKTEVTV (235 aa)).

This sequence belongs to the shisa family. SHISA9 subfamily. Component of some AMPA receptors (ionotropic glutamate receptors) complex.

Its subcellular location is the cell projection. It is found in the dendritic spine membrane. The protein localises to the synapse. Its function is as follows. Regulator of short-term neuronal synaptic plasticity in the dentate gyrus. Associates with AMPA receptors (ionotropic glutamate receptors) in synaptic spines and promotes AMPA receptor desensitization at excitatory synapses. This Xenopus tropicalis (Western clawed frog) protein is Protein shisa-9 (shisa9).